We begin with the raw amino-acid sequence, 268 residues long: Nickel import ATP-binding protein NikE (268 aa).

The ABC transporter domain maps to 4–252 (LNVSDLSHHY…SSDAGRVLQN (249 aa)). Position 45–52 (45–52 (GRSGCGKS)) interacts with ATP.

It belongs to the ABC transporter superfamily. Nickel importer (TC 3.A.1.5.3) family. In terms of assembly, the complex is composed of two ATP-binding proteins (NikD and NikE), two transmembrane proteins (NikB and NikC) and a solute-binding protein (NikA).

Its subcellular location is the cell inner membrane. It carries out the reaction Ni(2+)(out) + ATP + H2O = Ni(2+)(in) + ADP + phosphate + H(+). In terms of biological role, part of the ABC transporter complex NikABCDE involved in nickel import. Responsible for energy coupling to the transport system. This Escherichia coli O6:K15:H31 (strain 536 / UPEC) protein is Nickel import ATP-binding protein NikE.